The chain runs to 77 residues: uncharacterized protein (77 aa).

Residues 57–76 traverse the membrane as a helical segment; the sequence is NSAVICTLIANLMAFFMLLT.

It is found in the membrane. This is an uncharacterized protein from Schizosaccharomyces pombe (strain 972 / ATCC 24843) (Fission yeast).